The primary structure comprises 421 residues: Solute carrier family 35 member F3 (421 aa).

The tract at residues 25-45 (EGEERPRDSPGPAEAQAPAGV) is disordered. 10 consecutive transmembrane segments (helical) span residues 66–86 (IFWG…STQL), 98–118 (FTLT…YYVG), 149–169 (VFFT…YLYL), 179–199 (DVSV…WIVL), 208–228 (IVAA…DGFH), 232–252 (VIGI…KVLF), 266–286 (LFLS…PIIL), 305–325 (LCGF…GIAV), 326–346 (TYPT…AVID), and 352–372 (IVFN…FLLL). The tract at residues 393 to 421 (KKEEPAEGAADLSSGPQSKNRRARPSFAR) is disordered. The span at 411–421 (KNRRARPSFAR) shows a compositional bias: basic residues.

The protein belongs to the SLC35F solute transporter family. In terms of tissue distribution, expressed at the highest levels in the adult cerebellum.

Its subcellular location is the membrane. The catalysed reaction is thiamine(in) = thiamine(out). Functionally, mediates thiamine transport. The chain is Solute carrier family 35 member F3 from Homo sapiens (Human).